A 534-amino-acid chain; its full sequence is Cytochrome P450 714B1 (534 aa).

A topological domain (lumenal) is located at residue M1. A helical; Signal-anchor for type III membrane protein transmembrane segment spans residues 2-22 (VVVVAAAMAAASLCCGVAAYL). Residues 23–534 (YYVLWLAPER…RSKCDWAGFD (512 aa)) are Cytoplasmic-facing. C472 lines the heme pocket.

It belongs to the cytochrome P450 family. Heme is required as a cofactor. As to expression, highly expressed in spikelet and uppermost internode. Detected in shoots, roots, leaves and anthers.

It is found in the membrane. Its function is as follows. Catalyzes the 13-hydroxylation of gibberellins (GAs). Determines the ratio of GA4 and GA1. Converts GA12 into GA53. In Oryza sativa subsp. japonica (Rice), this protein is Cytochrome P450 714B1 (CYP714B1).